A 244-amino-acid polypeptide reads, in one-letter code: 5-oxoprolinase subunit A (244 aa).

The protein belongs to the LamB/PxpA family. Forms a complex composed of PxpA, PxpB and PxpC.

The enzyme catalyses 5-oxo-L-proline + ATP + 2 H2O = L-glutamate + ADP + phosphate + H(+). Its function is as follows. Catalyzes the cleavage of 5-oxoproline to form L-glutamate coupled to the hydrolysis of ATP to ADP and inorganic phosphate. The sequence is that of 5-oxoprolinase subunit A from Salmonella heidelberg (strain SL476).